Reading from the N-terminus, the 674-residue chain is DNA ligase (674 aa).

NAD(+) contacts are provided by residues 34–38 (DAEYD), 84–85 (SL), and E116. The active-site N6-AMP-lysine intermediate is the K118. Residues R139, E174, K291, and K315 each contribute to the NAD(+) site. 4 residues coordinate Zn(2+): C409, C412, C425, and C430. The BRCT domain occupies 586–674 (REGEALKGLT…TGKDPRALTA (89 aa)).

It belongs to the NAD-dependent DNA ligase family. LigA subfamily. Mg(2+) is required as a cofactor. It depends on Mn(2+) as a cofactor.

The enzyme catalyses NAD(+) + (deoxyribonucleotide)n-3'-hydroxyl + 5'-phospho-(deoxyribonucleotide)m = (deoxyribonucleotide)n+m + AMP + beta-nicotinamide D-nucleotide.. In terms of biological role, DNA ligase that catalyzes the formation of phosphodiester linkages between 5'-phosphoryl and 3'-hydroxyl groups in double-stranded DNA using NAD as a coenzyme and as the energy source for the reaction. It is essential for DNA replication and repair of damaged DNA. This is DNA ligase from Thermus sp. (strain AK16D).